The sequence spans 122 residues: Large ribosomal subunit protein uL14 (122 aa).

This sequence belongs to the universal ribosomal protein uL14 family. In terms of assembly, part of the 50S ribosomal subunit. Forms a cluster with proteins L3 and L19. In the 70S ribosome, L14 and L19 interact and together make contacts with the 16S rRNA in bridges B5 and B8.

Its function is as follows. Binds to 23S rRNA. Forms part of two intersubunit bridges in the 70S ribosome. This chain is Large ribosomal subunit protein uL14, found in Paraburkholderia phytofirmans (strain DSM 17436 / LMG 22146 / PsJN) (Burkholderia phytofirmans).